Consider the following 115-residue polypeptide: Large ribosomal subunit protein uL22 (115 aa).

It belongs to the universal ribosomal protein uL22 family. As to quaternary structure, part of the 50S ribosomal subunit.

Functionally, this protein binds specifically to 23S rRNA; its binding is stimulated by other ribosomal proteins, e.g. L4, L17, and L20. It is important during the early stages of 50S assembly. It makes multiple contacts with different domains of the 23S rRNA in the assembled 50S subunit and ribosome. In terms of biological role, the globular domain of the protein is located near the polypeptide exit tunnel on the outside of the subunit, while an extended beta-hairpin is found that lines the wall of the exit tunnel in the center of the 70S ribosome. The sequence is that of Large ribosomal subunit protein uL22 (rplV) from Wolbachia pipientis wMel.